A 198-amino-acid chain; its full sequence is NADH-quinone oxidoreductase subunit B (198 aa).

Residues 1–20 (MGLNPTQVSTSGSPQVSQPA) show a composition bias toward polar residues. Residues 1-29 (MGLNPTQVSTSGSPQVSQPATGVLDPRTG) form a disordered region. Cys77, Cys78, Cys142, and Cys172 together coordinate [4Fe-4S] cluster.

The protein belongs to the complex I 20 kDa subunit family. NDH-1 is composed of 14 different subunits. Subunits NuoB, C, D, E, F, and G constitute the peripheral sector of the complex. [4Fe-4S] cluster serves as cofactor.

Its subcellular location is the cell inner membrane. The enzyme catalyses a quinone + NADH + 5 H(+)(in) = a quinol + NAD(+) + 4 H(+)(out). NDH-1 shuttles electrons from NADH, via FMN and iron-sulfur (Fe-S) centers, to quinones in the respiratory chain. The immediate electron acceptor for the enzyme in this species is believed to be ubiquinone. Couples the redox reaction to proton translocation (for every two electrons transferred, four hydrogen ions are translocated across the cytoplasmic membrane), and thus conserves the redox energy in a proton gradient. The protein is NADH-quinone oxidoreductase subunit B of Afipia carboxidovorans (strain ATCC 49405 / DSM 1227 / KCTC 32145 / OM5) (Oligotropha carboxidovorans).